Consider the following 418-residue polypeptide: D-amino acid dehydrogenase (418 aa).

3 to 17 (VLVLGAGVAGVSSAW) contacts FAD.

The protein belongs to the DadA oxidoreductase family. Requires FAD as cofactor.

It catalyses the reaction a D-alpha-amino acid + A + H2O = a 2-oxocarboxylate + AH2 + NH4(+). Functionally, oxidative deamination of D-amino acids. In Neisseria meningitidis serogroup A / serotype 4A (strain DSM 15465 / Z2491), this protein is D-amino acid dehydrogenase.